Reading from the N-terminus, the 1902-residue chain is Putative surface cell antigen sca1 (1902 aa).

The signal sequence occupies residues 1-28 (MNKLTEQHLLKKSRFLKYSLLASISVGA). 5 disordered regions span residues 140-273 (GIEK…TFVP), 420-485 (QGVF…SRTA), 707-729 (TTTT…YSSS), 858-885 (NRRR…AWGN), and 1470-1548 (KSES…SDGD). 2 stretches are compositionally biased toward polar residues: residues 146-159 (QSQN…TEQM) and 168-197 (TASS…SPEH). Over residues 199–212 (TTAPGTPSSTPATP) the composition is skewed to low complexity. Positions 225–238 (LGANTPPNINTNSK) are enriched in polar residues. Residues 246–264 (SSSGPQQQAVQSSSQVKSE) show a composition bias toward low complexity. Residues 423 to 439 (FNKNKSSGGNARKSSAG) are compositionally biased toward polar residues. A compositionally biased stretch (basic and acidic residues) spans 445–482 (KKQEAQKQLSEIKKQEKAIKTASDKAKEVAASAKKETS). Residues 863 to 874 (RDGETSKQRTVD) show a composition bias toward basic and acidic residues. Residues 1491–1507 (LSSLPALASSNESALAL) show a composition bias toward low complexity. Positions 1521 to 1538 (SSEDEESYDSGFEEEEET) are enriched in acidic residues. The 285-residue stretch at 1618–1902 (ESHIKRGLWM…QGSVKLKVNL (285 aa)) folds into the Autotransporter domain.

The protein localises to the cell outer membrane. The sequence is that of Putative surface cell antigen sca1 (sca1) from Rickettsia conorii (strain ATCC VR-613 / Malish 7).